Consider the following 257-residue polypeptide: MRPDGRKPAQLRPIKIIRDFNIYAEGSVLIEFGNTKVIVTASVEDKVPPFLKGTGQGWITAEYSMIPRASETRSLREVVRGSPSGRTHEIQRLIGRSLRAAVDLKKLGEKTIWIDCDVIQADGGTRVASITGAFIAVADACIKLTKQNLVKANPLKDYVAAISVGKVRNEIVLDLNYTEDSNAQVDMNLVMTGKGEFVEIGATGEENTFSQEDFNKMLEYGKSGIERLIKIQKEFIEGIPSIGHWERKNIKEFVYKE.

Residues Arg-86 and 124–126 (GTR) contribute to the phosphate site.

It belongs to the RNase PH family. As to quaternary structure, homohexameric ring arranged as a trimer of dimers.

The catalysed reaction is tRNA(n+1) + phosphate = tRNA(n) + a ribonucleoside 5'-diphosphate. Its function is as follows. Phosphorolytic 3'-5' exoribonuclease that plays an important role in tRNA 3'-end maturation. Removes nucleotide residues following the 3'-CCA terminus of tRNAs; can also add nucleotides to the ends of RNA molecules by using nucleoside diphosphates as substrates, but this may not be physiologically important. Probably plays a role in initiation of 16S rRNA degradation (leading to ribosome degradation) during starvation. The protein is Ribonuclease PH of Sulfurihydrogenibium sp. (strain YO3AOP1).